The primary structure comprises 209 residues: Thiamine-phosphate synthase 1 (209 aa).

4-amino-2-methyl-5-(diphosphooxymethyl)pyrimidine-binding positions include 39–43 (QFREK) and Asn-74. Residues Asp-75 and Asp-94 each coordinate Mg(2+). Residue Ser-112 participates in 4-amino-2-methyl-5-(diphosphooxymethyl)pyrimidine binding. 138-140 (TQS) lines the 2-[(2R,5Z)-2-carboxy-4-methylthiazol-5(2H)-ylidene]ethyl phosphate pocket. 4-amino-2-methyl-5-(diphosphooxymethyl)pyrimidine is bound at residue Lys-141. 2-[(2R,5Z)-2-carboxy-4-methylthiazol-5(2H)-ylidene]ethyl phosphate is bound by residues Gly-170 and 190-191 (IS).

This sequence belongs to the thiamine-phosphate synthase family. Mg(2+) is required as a cofactor.

The catalysed reaction is 2-[(2R,5Z)-2-carboxy-4-methylthiazol-5(2H)-ylidene]ethyl phosphate + 4-amino-2-methyl-5-(diphosphooxymethyl)pyrimidine + 2 H(+) = thiamine phosphate + CO2 + diphosphate. It carries out the reaction 2-(2-carboxy-4-methylthiazol-5-yl)ethyl phosphate + 4-amino-2-methyl-5-(diphosphooxymethyl)pyrimidine + 2 H(+) = thiamine phosphate + CO2 + diphosphate. The enzyme catalyses 4-methyl-5-(2-phosphooxyethyl)-thiazole + 4-amino-2-methyl-5-(diphosphooxymethyl)pyrimidine + H(+) = thiamine phosphate + diphosphate. It functions in the pathway cofactor biosynthesis; thiamine diphosphate biosynthesis; thiamine phosphate from 4-amino-2-methyl-5-diphosphomethylpyrimidine and 4-methyl-5-(2-phosphoethyl)-thiazole: step 1/1. Condenses 4-methyl-5-(beta-hydroxyethyl)thiazole monophosphate (THZ-P) and 2-methyl-4-amino-5-hydroxymethyl pyrimidine pyrophosphate (HMP-PP) to form thiamine monophosphate (TMP). The sequence is that of Thiamine-phosphate synthase 1 from Streptococcus pneumoniae (strain ATCC BAA-255 / R6).